We begin with the raw amino-acid sequence, 483 residues long: Acetyl-coenzyme A carboxylase carboxyl transferase subunit beta, chloroplastic (483 aa).

The 263-residue stretch at 221–483 (LWVQCENCYG…FQFHGFFPRP (263 aa)) folds into the CoA carboxyltransferase N-terminal domain. Cys225, Cys228, Cys244, and Cys247 together coordinate Zn(2+). The segment at 225–247 (CENCYGLNYKKFFSSKMNICEQC) adopts a C4-type zinc-finger fold.

This sequence belongs to the AccD/PCCB family. Acetyl-CoA carboxylase is a heterohexamer composed of biotin carboxyl carrier protein, biotin carboxylase and 2 subunits each of ACCase subunit alpha and ACCase plastid-coded subunit beta (accD). Zn(2+) is required as a cofactor.

The protein resides in the plastid. It localises to the chloroplast stroma. The enzyme catalyses N(6)-carboxybiotinyl-L-lysyl-[protein] + acetyl-CoA = N(6)-biotinyl-L-lysyl-[protein] + malonyl-CoA. Its pathway is lipid metabolism; malonyl-CoA biosynthesis; malonyl-CoA from acetyl-CoA: step 1/1. In terms of biological role, component of the acetyl coenzyme A carboxylase (ACC) complex. Biotin carboxylase (BC) catalyzes the carboxylation of biotin on its carrier protein (BCCP) and then the CO(2) group is transferred by the transcarboxylase to acetyl-CoA to form malonyl-CoA. The chain is Acetyl-coenzyme A carboxylase carboxyl transferase subunit beta, chloroplastic from Nuphar advena (Common spatterdock).